Here is a 179-residue protein sequence, read N- to C-terminus: Transcriptional regulator ICP22 homolog (179 aa).

Basic and acidic residues predominate over residues 1 to 12 (MSRDRDRARPDT). The segment at 1–40 (MSRDRDRARPDTRLSSSDNESDDEDYQLPHSHPEYGSDSS) is disordered.

The protein belongs to the herpesviridae ICP22 family.

This chain is Transcriptional regulator ICP22 homolog (MDV088), found in Gallid herpesvirus 2 (strain Chicken/Md5/ATCC VR-987) (GaHV-2).